Here is a 577-residue protein sequence, read N- to C-terminus: Cleavage stimulation factor subunit 2 (577 aa).

Phosphoserine is present on Ser14. An RRM domain is found at 16–94 (RSVFVGNIPY…RALRVDNAAS (79 aa)). An interactions with CSTF3 and SYMPK region spans residues 108–248 (APVIESPYGE…VNGAPPLMQA (141 aa)). Lys189 is covalently cross-linked (Glycyl lysine isopeptide (Lys-Gly) (interchain with G-Cter in SUMO2)). Positions 207–230 (PVHGAGPGSGSNVSMNQQNPQAPQ) are disordered. Omega-N-methylarginine is present on Arg308. Residues 319 to 409 (RGLLGDAPND…DGRGGRDPRG (91 aa)) are disordered. Residues 360 to 373 (PGHESRGPPPHELR) are compositionally biased toward basic and acidic residues. Residues 410-414 (IDARG) form a 1; approximate repeat. The interval 410-469 (IDARGMEARAMEARGLDARGLEARAMEARAMEARAMEARAMEARAMEVRGMEARGMDTRG) is 12 X 5 AA tandem repeats of M-E-A-R-[AG]. Repeat copies occupy residues 415-419 (MEARA) and 420-424 (MEARG). The stretch at 425 to 429 (LDARG) is one 4; approximate repeat. The 5; approximate repeat unit spans residues 430 to 434 (LEARA). Tandem repeats lie at residues 435-439 (MEARA), 440-444 (MEARA), 445-449 (MEARA), and 450-454 (MEARA). The stretch at 455-459 (MEVRG) is one 10; approximate repeat. Repeat unit 11 spans residues 460–464 (MEARG). The 12; approximate repeat unit spans residues 465–469 (MDTRG). 2 positions are modified to omega-N-methylarginine: Arg468 and Arg475. The interval 509–532 (LQGASIQGGSQPGGFSPGQNQVTP) is disordered. The tract at residues 514–577 (IQGGSQPGGF…EQIQKSTGAP (64 aa)) is interaction with RPO2TC1. A phosphoserine mark is found at Ser518 and Ser524.

The CSTF complex is composed of CSTF1 (50 kDa subunit), CSTF2 (64 kDa subunit) and CSTF3 (77 kDa subunit). CSTF2 directly interacts with CSTF3, SYMPK and RPO2TC1. Interacts with HSF1 in heat-stressed cells. Interacts with CPSF2, CPSF3 and FIP1L1. Interacts with DDX1.

It is found in the nucleus. Functionally, one of the multiple factors required for polyadenylation and 3'-end cleavage of mammalian pre-mRNAs. This subunit is directly involved in the binding to pre-mRNAs. This Pongo abelii (Sumatran orangutan) protein is Cleavage stimulation factor subunit 2 (CSTF2).